The chain runs to 287 residues: PIH1 domain-containing protein 1 (287 aa).

It belongs to the PIH1 family.

The protein resides in the nucleus. Involved in the assembly of C/D box small nucleolar ribonucleoprotein (snoRNP) particles. Recruits the SWI/SNF complex to the core promoter of rRNA genes and enhances pre-rRNA transcription. Mediates interaction of TELO2 with the R2TP complex which is necessary for the stability of MTOR and SMG1. Positively regulates the assembly and activity of the mTORC1 complex. This chain is PIH1 domain-containing protein 1 (pih1d1), found in Danio rerio (Zebrafish).